A 595-amino-acid polypeptide reads, in one-letter code: Putative terpenoid synthase 16 (595 aa).

The Mg(2+) site is built by D349, D353, N494, and D502. The DDXXD motif motif lies at 349–353 (DDTCD).

Belongs to the terpene synthase family. Tpsa subfamily. The cofactor is Mg(2+). Mn(2+) is required as a cofactor.

The protein localises to the cytoplasm. It participates in secondary metabolite biosynthesis; terpenoid biosynthesis. This Arabidopsis thaliana (Mouse-ear cress) protein is Putative terpenoid synthase 16 (TPS16).